Reading from the N-terminus, the 55-residue chain is Cytochrome b-c1 complex subunit 9 (55 aa).

The Mitochondrial matrix portion of the chain corresponds to 1 to 15 (MKVIYNTLFKRTSTY). The chain crosses the membrane as a helical span at residues 16 to 41 (AVAIIASAFFFERALDVTSVAIFEGI). The Chloroplast intermembrane portion of the chain corresponds to 42 to 55 (NKGKLWKDIKGKYE).

This sequence belongs to the UQCR10/QCR9 family. In terms of assembly, component of the ubiquinol-cytochrome c oxidoreductase (cytochrome b-c1 complex, complex III, CIII), a multisubunit enzyme composed of 3 respiratory subunits cytochrome b, cytochrome c1 and Rieske protein, 2 core protein subunits, and additional low-molecular weight protein subunits. The complex exists as an obligatory dimer and forms supercomplexes (SCs) in the inner mitochondrial membrane with cytochrome c oxidase (complex IV, CIV).

The protein resides in the mitochondrion inner membrane. In terms of biological role, component of the ubiquinol-cytochrome c oxidoreductase, a multisubunit transmembrane complex that is part of the mitochondrial electron transport chain which drives oxidative phosphorylation. The respiratory chain contains 3 multisubunit complexes succinate dehydrogenase (complex II, CII), ubiquinol-cytochrome c oxidoreductase (cytochrome b-c1 complex, complex III, CIII) and cytochrome c oxidase (complex IV, CIV), that cooperate to transfer electrons derived from NADH and succinate to molecular oxygen, creating an electrochemical gradient over the inner membrane that drives transmembrane transport and the ATP synthase. The cytochrome b-c1 complex catalyzes electron transfer from ubiquinol to cytochrome c, linking this redox reaction to translocation of protons across the mitochondrial inner membrane, with protons being carried across the membrane as hydrogens on the quinol. In the process called Q cycle, 2 protons are consumed from the matrix, 4 protons are released into the intermembrane space and 2 electrons are passed to cytochrome c. This Drosophila melanogaster (Fruit fly) protein is Cytochrome b-c1 complex subunit 9 (ox).